The chain runs to 1040 residues: Contactin-2 (1040 aa).

An N-terminal signal peptide occupies residues 1-30 (MGAPARKRASLLLLLLATMALVSSPGWSFS). Ig-like C2-type domains are found at residues 39-130 (PVFE…AVLR), 135-224 (QEFS…SVFS), 241-324 (PSIK…GRII), 329-413 (PEWL…AELA), 419-506 (PDFR…GILS), and 511-605 (TKIT…ATVL). 4 disulfide bridges follow: Cys-63–Cys-113, Cys-157–Cys-209, Cys-263–Cys-308, and Cys-350–Cys-397. 3 N-linked (GlcNAc...) asparagine glycosylation sites follow: Asn-78, Asn-200, and Asn-206. N-linked (GlcNAc...) asparagine glycans are attached at residues Asn-463, Asn-479, Asn-500, and Asn-527. 4 consecutive Fibronectin type-III domains span residues 612–710 (PPGG…TKEA), 715–812 (APSG…SAEE), 817–913 (APAK…MKPP), and 917–1008 (PPGN…NGGT). A glycan (N-linked (GlcNAc...) asparagine) is linked at Asn-777. The Cell attachment site motif lies at 796 to 798 (RGD). 3 N-linked (GlcNAc...) asparagine glycosylation sites follow: Asn-832, Asn-920, and Asn-942. The disordered stretch occupies residues 897–922 (GTGPASPSADAMTMKPPPRRPPGNIS). Ser-1014 carries GPI-anchor amidated serine lipidation. The propeptide at 1015–1040 (SAVRPAHPGPVFSCMVILMLAGCQRL) is removed in mature form.

Belongs to the immunoglobulin superfamily. Contactin family.

The protein localises to the cell membrane. In terms of biological role, in conjunction with another transmembrane protein, CNTNAP2, contributes to the organization of axonal domains at nodes of Ranvier by maintaining voltage-gated potassium channels at the juxtaparanodal region. This is Contactin-2 (Cntn2) from Mus musculus (Mouse).